Here is a 330-residue protein sequence, read N- to C-terminus: Aspartate--ammonia ligase (330 aa).

It belongs to the class-II aminoacyl-tRNA synthetase family. AsnA subfamily.

It is found in the cytoplasm. The enzyme catalyses L-aspartate + NH4(+) + ATP = L-asparagine + AMP + diphosphate + H(+). It functions in the pathway amino-acid biosynthesis; L-asparagine biosynthesis; L-asparagine from L-aspartate (ammonia route): step 1/1. This Shigella flexneri serotype 5b (strain 8401) protein is Aspartate--ammonia ligase.